The primary structure comprises 640 residues: Threonine--tRNA ligase (640 aa).

Residues 1 to 61 enclose the TGS domain; it reads MPIITLPDGS…DHDATLQIIT (61 aa). Residues 242–533 form a catalytic region; it reads DHRKLGKRLD…LIEHYEGAFP (292 aa). Residues Cys-333, His-384, and His-510 each coordinate Zn(2+).

It belongs to the class-II aminoacyl-tRNA synthetase family. As to quaternary structure, homodimer. Requires Zn(2+) as cofactor.

Its subcellular location is the cytoplasm. The enzyme catalyses tRNA(Thr) + L-threonine + ATP = L-threonyl-tRNA(Thr) + AMP + diphosphate + H(+). Its function is as follows. Catalyzes the attachment of threonine to tRNA(Thr) in a two-step reaction: L-threonine is first activated by ATP to form Thr-AMP and then transferred to the acceptor end of tRNA(Thr). Also edits incorrectly charged L-seryl-tRNA(Thr). The sequence is that of Threonine--tRNA ligase from Azotobacter vinelandii (strain DJ / ATCC BAA-1303).